Reading from the N-terminus, the 264-residue chain is Protein-L-isoaspartate O-methyltransferase (264 aa).

The tract at residues 1–49 (MRKPVGSKDGSGVYSRQGLDGYTPANSNTRISTATLPRPEPLRPAASSA) is disordered. The segment covering 24–35 (PANSNTRISTAT) has biased composition (polar residues). Residue Ser112 is part of the active site.

It belongs to the methyltransferase superfamily. L-isoaspartyl/D-aspartyl protein methyltransferase family.

The protein localises to the cytoplasm. The catalysed reaction is [protein]-L-isoaspartate + S-adenosyl-L-methionine = [protein]-L-isoaspartate alpha-methyl ester + S-adenosyl-L-homocysteine. In terms of biological role, catalyzes the methyl esterification of L-isoaspartyl residues in peptides and proteins that result from spontaneous decomposition of normal L-aspartyl and L-asparaginyl residues. It plays a role in the repair and/or degradation of damaged proteins. The sequence is that of Protein-L-isoaspartate O-methyltransferase from Bordetella avium (strain 197N).